The following is a 151-amino-acid chain: Deoxyuridine 5'-triphosphate nucleotidohydrolase (151 aa).

Residues 70 to 72 (RSG), Asn-83, 87 to 89 (LID), and Met-97 each bind substrate.

Belongs to the dUTPase family. In terms of assembly, homotrimer. Requires Mg(2+) as cofactor.

It carries out the reaction dUTP + H2O = dUMP + diphosphate + H(+). The protein operates within pyrimidine metabolism; dUMP biosynthesis; dUMP from dCTP (dUTP route): step 2/2. In terms of biological role, this enzyme is involved in nucleotide metabolism: it produces dUMP, the immediate precursor of thymidine nucleotides and it decreases the intracellular concentration of dUTP so that uracil cannot be incorporated into DNA. The chain is Deoxyuridine 5'-triphosphate nucleotidohydrolase from Escherichia fergusonii (strain ATCC 35469 / DSM 13698 / CCUG 18766 / IAM 14443 / JCM 21226 / LMG 7866 / NBRC 102419 / NCTC 12128 / CDC 0568-73).